The primary structure comprises 250 residues: 3-deoxy-manno-octulosonate cytidylyltransferase (250 aa).

The protein belongs to the KdsB family.

Its subcellular location is the cytoplasm. It carries out the reaction 3-deoxy-alpha-D-manno-oct-2-ulosonate + CTP = CMP-3-deoxy-beta-D-manno-octulosonate + diphosphate. It functions in the pathway nucleotide-sugar biosynthesis; CMP-3-deoxy-D-manno-octulosonate biosynthesis; CMP-3-deoxy-D-manno-octulosonate from 3-deoxy-D-manno-octulosonate and CTP: step 1/1. It participates in bacterial outer membrane biogenesis; lipopolysaccharide biosynthesis. Functionally, activates KDO (a required 8-carbon sugar) for incorporation into bacterial lipopolysaccharide in Gram-negative bacteria. The polypeptide is 3-deoxy-manno-octulosonate cytidylyltransferase (Azorhizobium caulinodans (strain ATCC 43989 / DSM 5975 / JCM 20966 / LMG 6465 / NBRC 14845 / NCIMB 13405 / ORS 571)).